Reading from the N-terminus, the 475-residue chain is MNLRIVYLRSLNIQGLTKMTDDKNNLLHRGLDNIQPPFSNFIRAQATASVFLLVATITALWWANSDYSSTYQMLKHMQIGFFLGDIELQASLKHIINDGLMVIFFFFIGLEIKREVLAGDLAIAENRRMLILCALGGMICPAVIYSLFNWSLDSQIGWGIPMATDTAFALGALTLVRKHIPISLLAFLVGLAIVDDVGAIVVIALFYTQEISVIFLSISFSLIAFLAIANYAGVLRPIFYILIGIAAWWTMLKSGVHPTFAGVAIALTVPARPMLPPDELLSKVKAKITAMKKNKGHQLDALANREDHEQVLDVRDFAEHGSAPLRRWEDALDLPVSLFVLPLFALVNAGVEVSFSSLIETLQHSVGLGIVIGLVIGKFVGISGACWLGLRYKIGSLPEGINMQHVIGMSLIAGIGFTMSTFIATLGFDSQPEYLQSAKGSILFASLLSAILGLLYLRIIAAKKAPNSASKNGEN.

12 helical membrane passes run 44 to 64 (AQAT…WWAN), 92 to 112 (LKHI…GLEI), 130 to 150 (LILC…LFNW), 156 to 176 (IGWG…LTLV), 186 to 206 (AFLV…IALF), 211 to 231 (ISVI…IANY), 232 to 252 (AGVL…WTML), 255 to 275 (GVHP…RPML), 331 to 351 (ALDL…NAGV), 368 to 388 (LGIV…ACWL), 406 to 426 (VIGM…IATL), and 442 to 462 (ILFA…IIAA).

Belongs to the NhaA Na(+)/H(+) (TC 2.A.33) antiporter family.

The protein localises to the cell inner membrane. The catalysed reaction is Na(+)(in) + 2 H(+)(out) = Na(+)(out) + 2 H(+)(in). In terms of biological role, na(+)/H(+) antiporter that extrudes sodium in exchange for external protons. This chain is Na(+)/H(+) antiporter NhaA 2, found in Psychromonas ingrahamii (strain DSM 17664 / CCUG 51855 / 37).